The following is a 400-amino-acid chain: Apolipoprotein N-acyltransferase (400 aa).

5 helical membrane-spanning segments follow: residues 16-36, 42-62, 67-87, 97-117, and 123-143; these read AISP…VLFV, FGVG…GLRY, FLIP…FYIG, FAFL…IVPE, and SYIG…WILF. Residues 181-400 form the CN hydrolase domain; it reads AQSAVSQDFD…AIITPFVSSR (220 aa). Catalysis depends on Glu222, which acts as the Proton acceptor. The active site involves Lys283. Cys332 serves as the catalytic Nucleophile. Residues 377–397 traverse the membrane as a helical segment; sequence YGSVIFHATNLSPAAIITPFV.

The protein belongs to the CN hydrolase family. Apolipoprotein N-acyltransferase subfamily.

Its subcellular location is the cell inner membrane. It catalyses the reaction N-terminal S-1,2-diacyl-sn-glyceryl-L-cysteinyl-[lipoprotein] + a glycerophospholipid = N-acyl-S-1,2-diacyl-sn-glyceryl-L-cysteinyl-[lipoprotein] + a 2-acyl-sn-glycero-3-phospholipid + H(+). Its pathway is protein modification; lipoprotein biosynthesis (N-acyl transfer). Catalyzes the phospholipid dependent N-acylation of the N-terminal cysteine of apolipoprotein, the last step in lipoprotein maturation. This is Apolipoprotein N-acyltransferase from Helicobacter hepaticus (strain ATCC 51449 / 3B1).